The primary structure comprises 423 residues: Enolase (423 aa).

A (2R)-2-phosphoglycerate-binding site is contributed by glutamine 162. The active-site Proton donor is glutamate 204. 3 residues coordinate Mg(2+): aspartate 241, glutamate 284, and aspartate 311. (2R)-2-phosphoglycerate contacts are provided by lysine 336, arginine 365, serine 366, and lysine 387. Lysine 336 acts as the Proton acceptor in catalysis.

Belongs to the enolase family. Requires Mg(2+) as cofactor.

It localises to the cytoplasm. It is found in the secreted. The protein localises to the cell surface. It carries out the reaction (2R)-2-phosphoglycerate = phosphoenolpyruvate + H2O. It participates in carbohydrate degradation; glycolysis; pyruvate from D-glyceraldehyde 3-phosphate: step 4/5. Functionally, catalyzes the reversible conversion of 2-phosphoglycerate (2-PG) into phosphoenolpyruvate (PEP). It is essential for the degradation of carbohydrates via glycolysis. The sequence is that of Enolase from Bartonella bacilliformis (strain ATCC 35685 / KC583 / Herrer 020/F12,63).